Here is a 184-residue protein sequence, read N- to C-terminus: uncharacterized protein (184 aa).

Residues Y5 to H27 traverse the membrane as a helical segment.

The protein localises to the membrane. This is an uncharacterized protein from Methanocaldococcus jannaschii (strain ATCC 43067 / DSM 2661 / JAL-1 / JCM 10045 / NBRC 100440) (Methanococcus jannaschii).